The primary structure comprises 299 residues: GTPase Era (299 aa).

The region spanning lysine 4–glutamate 171 is the Era-type G domain. Residues glycine 12–serine 19 are G1. Glycine 12–serine 19 lines the GTP pocket. The interval glutamine 38–asparagine 42 is G2. Residues aspartate 59–glycine 62 are G3. GTP-binding positions include aspartate 59 to isoleucine 63 and asparagine 121 to aspartate 124. Residues asparagine 121 to aspartate 124 form a G4 region. The tract at residues isoleucine 150 to alanine 152 is G5. A KH type-2 domain is found at threonine 202–lysine 280.

Belongs to the TRAFAC class TrmE-Era-EngA-EngB-Septin-like GTPase superfamily. Era GTPase family. In terms of assembly, monomer.

Its subcellular location is the cytoplasm. The protein localises to the cell membrane. Functionally, an essential GTPase that binds both GDP and GTP, with rapid nucleotide exchange. Plays a role in 16S rRNA processing and 30S ribosomal subunit biogenesis and possibly also in cell cycle regulation and energy metabolism. In Streptococcus gordonii (strain Challis / ATCC 35105 / BCRC 15272 / CH1 / DL1 / V288), this protein is GTPase Era.